Reading from the N-terminus, the 1488-residue chain is Chromosome partition protein MukB (1488 aa).

Position 34–41 (34–41 (GGNGAGKS)) interacts with ATP. Coiled coils occupy residues 326–418 (LEAD…QYNQ), 444–472 (LDTF…QTAH), and 509–602 (RHLA…RRAP). A flexible hinge region spans residues 666-783 (PGGAEDQRLN…SLPIFGRAAR (118 aa)). 3 coiled-coil regions span residues 835–923 (EAEI…AKLE), 977–1116 (EMLS…AKAG), and 1209–1265 (VEAI…LQSV). The tract at residues 1049–1074 (ADSGAEERARQRRDELHAQLSNNRSR) is disordered. Over residues 1051–1065 (SGAEERARQRRDELH) the composition is skewed to basic and acidic residues.

This sequence belongs to the SMC family. MukB subfamily. Homodimerization via its hinge domain. Binds to DNA via its C-terminal region. Interacts, and probably forms a ternary complex, with MukE and MukF via its C-terminal region. The complex formation is stimulated by calcium or magnesium. Interacts with tubulin-related protein FtsZ.

It localises to the cytoplasm. It is found in the nucleoid. In terms of biological role, plays a central role in chromosome condensation, segregation and cell cycle progression. Functions as a homodimer, which is essential for chromosome partition. Involved in negative DNA supercoiling in vivo, and by this means organize and compact chromosomes. May achieve or facilitate chromosome segregation by condensation DNA from both sides of a centrally located replisome during cell division. The sequence is that of Chromosome partition protein MukB from Salmonella heidelberg (strain SL476).